Here is a 716-residue protein sequence, read N- to C-terminus: Fatty acid oxidation complex subunit alpha (716 aa).

The segment at 1 to 189 is enoyl-CoA hydratase/isomerase; sequence MIYQSPTIQV…KVGAVDAVVA (189 aa). Substrate is bound at residue Asp-296. A 3-hydroxyacyl-CoA dehydrogenase region spans residues 311–716; it reads KEVKNAAVLG…ATNNGSYYQA (406 aa). Residues Met-324, Asp-343, 400-402, Lys-407, and Ser-429 each bind NAD(+); that span reads VVE. His-450 serves as the catalytic For 3-hydroxyacyl-CoA dehydrogenase activity. An NAD(+)-binding site is contributed by Asn-453. Substrate-binding residues include Asn-500 and Tyr-660.

This sequence in the N-terminal section; belongs to the enoyl-CoA hydratase/isomerase family. In the C-terminal section; belongs to the 3-hydroxyacyl-CoA dehydrogenase family. As to quaternary structure, heterotetramer of two alpha chains (FadB) and two beta chains (FadA).

The catalysed reaction is a (3S)-3-hydroxyacyl-CoA + NAD(+) = a 3-oxoacyl-CoA + NADH + H(+). It carries out the reaction a (3S)-3-hydroxyacyl-CoA = a (2E)-enoyl-CoA + H2O. It catalyses the reaction a 4-saturated-(3S)-3-hydroxyacyl-CoA = a (3E)-enoyl-CoA + H2O. The enzyme catalyses (3S)-3-hydroxybutanoyl-CoA = (3R)-3-hydroxybutanoyl-CoA. The catalysed reaction is a (3Z)-enoyl-CoA = a 4-saturated (2E)-enoyl-CoA. It carries out the reaction a (3E)-enoyl-CoA = a 4-saturated (2E)-enoyl-CoA. It participates in lipid metabolism; fatty acid beta-oxidation. Its function is as follows. Involved in the aerobic and anaerobic degradation of long-chain fatty acids via beta-oxidation cycle. Catalyzes the formation of 3-oxoacyl-CoA from enoyl-CoA via L-3-hydroxyacyl-CoA. It can also use D-3-hydroxyacyl-CoA and cis-3-enoyl-CoA as substrate. The chain is Fatty acid oxidation complex subunit alpha from Shewanella putrefaciens (strain CN-32 / ATCC BAA-453).